The sequence spans 131 residues: Small ribosomal subunit protein uS11 (131 aa).

The span at 1–15 (MAAQKVKKTRRRKER) shows a compositional bias: basic residues. A disordered region spans residues 1-23 (MAAQKVKKTRRRKERKNVEHGAA).

The protein belongs to the universal ribosomal protein uS11 family. Part of the 30S ribosomal subunit. Interacts with proteins S7 and S18. Binds to IF-3.

Functionally, located on the platform of the 30S subunit, it bridges several disparate RNA helices of the 16S rRNA. Forms part of the Shine-Dalgarno cleft in the 70S ribosome. This chain is Small ribosomal subunit protein uS11, found in Clostridium perfringens (strain 13 / Type A).